The following is a 184-amino-acid chain: MIEHNPTTIYGTTIVTVRKDGKVVIAGDGQVSLGNTVMKGNARKVRRIGKGNVIAGFAGATADAFTLLERLEAKLEQYPDQLMRASVELAKDWRTDRYLRKLEAMMLVADSKVTLALTGTGDVLEPEQGVMAIGSGGNYALAAARALIETDKSAEEIARKAMNIAADICIYTNHNIIVESLDAQ.

Residue threonine 12 is part of the active site. Residues alanine 166, cysteine 169, and threonine 172 each coordinate Na(+).

It belongs to the peptidase T1B family. HslV subfamily. A double ring-shaped homohexamer of HslV is capped on each side by a ring-shaped HslU homohexamer. The assembly of the HslU/HslV complex is dependent on binding of ATP.

Its subcellular location is the cytoplasm. The catalysed reaction is ATP-dependent cleavage of peptide bonds with broad specificity.. Allosterically activated by HslU binding. In terms of biological role, protease subunit of a proteasome-like degradation complex believed to be a general protein degrading machinery. This chain is ATP-dependent protease subunit HslV, found in Brucella canis (strain ATCC 23365 / NCTC 10854 / RM-666).